Consider the following 209-residue polypeptide: Uracil phosphoribosyltransferase (209 aa).

5-phospho-alpha-D-ribose 1-diphosphate contacts are provided by residues R78, R103, and 130–138 (DPMFATGGT). Uracil is bound by residues I193 and 198-200 (GDA). D199 lines the 5-phospho-alpha-D-ribose 1-diphosphate pocket.

Belongs to the UPRTase family. It depends on Mg(2+) as a cofactor.

It catalyses the reaction UMP + diphosphate = 5-phospho-alpha-D-ribose 1-diphosphate + uracil. It participates in pyrimidine metabolism; UMP biosynthesis via salvage pathway; UMP from uracil: step 1/1. Allosterically activated by GTP. In terms of biological role, catalyzes the conversion of uracil and 5-phospho-alpha-D-ribose 1-diphosphate (PRPP) to UMP and diphosphate. This Campylobacter fetus subsp. fetus (strain 82-40) protein is Uracil phosphoribosyltransferase.